Reading from the N-terminus, the 406-residue chain is Enoyl-[acyl-carrier-protein] reductase [NADH] (406 aa).

NAD(+) contacts are provided by residues 48–53 (GASTGF), 74–75 (FE), 111–112 (DA), and 140–141 (IA). A substrate-binding site is contributed by Tyr226. Tyr236 serves as the catalytic Proton donor. NAD(+) is bound by residues Lys245 and 275-277 (LVT).

This sequence belongs to the TER reductase family. Monomer.

The enzyme catalyses a 2,3-saturated acyl-[ACP] + NAD(+) = a (2E)-enoyl-[ACP] + NADH + H(+). The protein operates within lipid metabolism; fatty acid biosynthesis. Its function is as follows. Involved in the final reduction of the elongation cycle of fatty acid synthesis (FAS II). Catalyzes the reduction of a carbon-carbon double bond in an enoyl moiety that is covalently linked to an acyl carrier protein (ACP). The sequence is that of Enoyl-[acyl-carrier-protein] reductase [NADH] from Coxiella burnetii (strain RSA 331 / Henzerling II).